We begin with the raw amino-acid sequence, 725 residues long: ABC transporter G family member 7 (725 aa).

Residues 12–34 (VVSGIGGNGVGGALAAVAAALLV) form a helical membrane-spanning segment. The region spanning 70–316 (IRWRNITCSL…YFGNFGFLCP (247 aa)) is the ABC transporter domain. 108-115 (GPSGSGKT) contacts ATP. One can recognise an ABC transmembrane type-2 domain in the interval 392 to 603 (RQFFLLLKRA…AFQGLCINEF (212 aa)). Helical transmembrane passes span 446–466 (LLQV…VGVF), 493–513 (IAEI…LYPM), 528–548 (GIVT…GAMV), and 553–573 (AAMA…GYYV). Residues 676–725 (NSGVQLDKAEVDQTEKPEDDDINQPLDDQNQTSDSDDELDEIRPFVLEGL) form a disordered region. The segment covering 682–691 (DKAEVDQTEK) has biased composition (basic and acidic residues).

The protein belongs to the ABC transporter superfamily. ABCG family. Eye pigment precursor importer (TC 3.A.1.204) subfamily.

Its subcellular location is the membrane. This is ABC transporter G family member 7 (ABCG7) from Arabidopsis thaliana (Mouse-ear cress).